Reading from the N-terminus, the 178-residue chain is CCHC-type zinc finger nucleic acid binding protein (178 aa).

Ser-2 bears the N-acetylserine mark. Residues Asn-4 to Thr-21 form a CCHC-type 1 zinc finger. Position 8 is an N6-acetyllysine (Lys-8). An omega-N-methylarginine; by PRMT1 mark is found at Arg-25 and Arg-27. The RNA-binding Arg/Gly-rich region (RGG-box) stretch occupies residues Arg-25 to Thr-38. Omega-N-methylarginine is present on residues Arg-32 and Arg-34. Ser-49 carries the post-translational modification Phosphoserine. 6 consecutive CCHC-type zinc fingers follow at residues Asp-52–Leu-69, Asp-72–Glu-90, Gln-97–His-114, Gln-118–Lys-135, Val-136–Lys-153, and Val-157–Ile-174. Omega-N-methylarginine is present on residues Asp-72, Gly-79, and Arg-80.

Associates with the 40S ribosomal subunit, the 80S ribosome and with polysomes. In terms of processing, arginine methylation by PRMT1 in the Arg/Gly-rich region impedes RNA binding.

The protein resides in the nucleus. It is found in the cytoplasm. It localises to the endoplasmic reticulum. Functionally, single-stranded DNA-binding protein that preferentially binds to the sterol regulatory element (SRE) sequence 5'-GTGCGGTG-3', and thereby mediates transcriptional repression. Has a role as transactivator of the Myc promoter. Binds single-stranded RNA in a sequence-specific manner. Binds G-rich elements in target mRNA coding sequences. Prevents G-quadruplex structure formation in vitro, suggesting a role in supporting translation by resolving stable structures on mRNAs. The chain is CCHC-type zinc finger nucleic acid binding protein from Mus musculus (Mouse).